A 522-amino-acid polypeptide reads, in one-letter code: Apolipoprotein N-acyltransferase (522 aa).

6 consecutive transmembrane segments (helical) span residues 17-37, 61-81, 98-118, 127-147, 164-184, and 197-217; these read YFTY…FSPF, TALL…VSWL, FLVG…TYLV, VIFA…FTGF, IAPI…SAVI, and LKLV…SAYS. A CN hydrolase domain is found at 236–483; the sequence is AQGNIEQNLK…ETTLTYKIAP (248 aa). The active-site Proton acceptor is the glutamate 276. The active site involves lysine 342. Cysteine 394 acts as the Nucleophile in catalysis. Residues 495-515 traverse the membrane as a helical segment; it reads NMPLYALSLLFLLLHSMMAFI.

This sequence belongs to the CN hydrolase family. Apolipoprotein N-acyltransferase subfamily.

Its subcellular location is the cell inner membrane. It carries out the reaction N-terminal S-1,2-diacyl-sn-glyceryl-L-cysteinyl-[lipoprotein] + a glycerophospholipid = N-acyl-S-1,2-diacyl-sn-glyceryl-L-cysteinyl-[lipoprotein] + a 2-acyl-sn-glycero-3-phospholipid + H(+). It participates in protein modification; lipoprotein biosynthesis (N-acyl transfer). Functionally, catalyzes the phospholipid dependent N-acylation of the N-terminal cysteine of apolipoprotein, the last step in lipoprotein maturation. This is Apolipoprotein N-acyltransferase from Haemophilus influenzae (strain ATCC 51907 / DSM 11121 / KW20 / Rd).